The primary structure comprises 473 residues: UDP-N-acetylmuramate--L-alanine ligase (473 aa).

Residue 119 to 125 coordinates ATP; that stretch reads GTHGKTT.

It belongs to the MurCDEF family.

It is found in the cytoplasm. It catalyses the reaction UDP-N-acetyl-alpha-D-muramate + L-alanine + ATP = UDP-N-acetyl-alpha-D-muramoyl-L-alanine + ADP + phosphate + H(+). It functions in the pathway cell wall biogenesis; peptidoglycan biosynthesis. In terms of biological role, cell wall formation. The sequence is that of UDP-N-acetylmuramate--L-alanine ligase from Caulobacter vibrioides (strain NA1000 / CB15N) (Caulobacter crescentus).